A 387-amino-acid chain; its full sequence is Structural protein ORF387 (387 aa).

Residues 315–387 are a coiled coil; that stretch reads KTFQEMVKVA…EEKNNTVKLS (73 aa). The segment at 365-387 is disordered; it reads LTEEQQQQNETEEEEKNNTVKLS.

It is found in the virion. The protein is Structural protein ORF387 of Acidianus convivator (ATV).